Consider the following 333-residue polypeptide: Holliday junction branch migration complex subunit RuvB (333 aa).

The large ATPase domain (RuvB-L) stretch occupies residues 1–182 (MEERLVSGEV…FGVISRLEYY (182 aa)). ATP is bound by residues leucine 21, arginine 22, glycine 63, lysine 66, threonine 67, threonine 68, 129–131 (EDY), arginine 172, tyrosine 182, and arginine 219. Threonine 67 contacts Mg(2+). The interval 183–253 (HVDQLAQIIE…LAVEALERLQ (71 aa)) is small ATPAse domain (RuvB-S). The segment at 256 to 333 (RLGLDQIDHK…THLGMEVPKR (78 aa)) is head domain (RuvB-H). Positions 311 and 316 each coordinate DNA.

It belongs to the RuvB family. In terms of assembly, homohexamer. Forms an RuvA(8)-RuvB(12)-Holliday junction (HJ) complex. HJ DNA is sandwiched between 2 RuvA tetramers; dsDNA enters through RuvA and exits via RuvB. An RuvB hexamer assembles on each DNA strand where it exits the tetramer. Each RuvB hexamer is contacted by two RuvA subunits (via domain III) on 2 adjacent RuvB subunits; this complex drives branch migration. In the full resolvosome a probable DNA-RuvA(4)-RuvB(12)-RuvC(2) complex forms which resolves the HJ.

The protein resides in the cytoplasm. The catalysed reaction is ATP + H2O = ADP + phosphate + H(+). In terms of biological role, the RuvA-RuvB-RuvC complex processes Holliday junction (HJ) DNA during genetic recombination and DNA repair, while the RuvA-RuvB complex plays an important role in the rescue of blocked DNA replication forks via replication fork reversal (RFR). RuvA specifically binds to HJ cruciform DNA, conferring on it an open structure. The RuvB hexamer acts as an ATP-dependent pump, pulling dsDNA into and through the RuvAB complex. RuvB forms 2 homohexamers on either side of HJ DNA bound by 1 or 2 RuvA tetramers; 4 subunits per hexamer contact DNA at a time. Coordinated motions by a converter formed by DNA-disengaged RuvB subunits stimulates ATP hydrolysis and nucleotide exchange. Immobilization of the converter enables RuvB to convert the ATP-contained energy into a lever motion, pulling 2 nucleotides of DNA out of the RuvA tetramer per ATP hydrolyzed, thus driving DNA branch migration. The RuvB motors rotate together with the DNA substrate, which together with the progressing nucleotide cycle form the mechanistic basis for DNA recombination by continuous HJ branch migration. Branch migration allows RuvC to scan DNA until it finds its consensus sequence, where it cleaves and resolves cruciform DNA. The chain is Holliday junction branch migration complex subunit RuvB from Geobacillus kaustophilus (strain HTA426).